Consider the following 193-residue polypeptide: Orotate phosphoribosyltransferase (193 aa).

5-phospho-alpha-D-ribose 1-diphosphate contacts are provided by residues Arg107, Lys108, Lys111, His113, and 133–141 (EDVITSGGS). Orotate is bound by residues Thr137 and Arg165.

The protein belongs to the purine/pyrimidine phosphoribosyltransferase family. PyrE subfamily. Homodimer. Mg(2+) is required as a cofactor.

It catalyses the reaction orotidine 5'-phosphate + diphosphate = orotate + 5-phospho-alpha-D-ribose 1-diphosphate. The protein operates within pyrimidine metabolism; UMP biosynthesis via de novo pathway; UMP from orotate: step 1/2. Its function is as follows. Catalyzes the transfer of a ribosyl phosphate group from 5-phosphoribose 1-diphosphate to orotate, leading to the formation of orotidine monophosphate (OMP). This chain is Orotate phosphoribosyltransferase, found in Rhodopirellula baltica (strain DSM 10527 / NCIMB 13988 / SH1).